The chain runs to 136 residues: Large ribosomal subunit protein eL27 (136 aa).

Residues 5 to 40 (MKPGKVVMVLAGRYAGRKAVIVKNIDDGTADRPYSH) enclose the KOW domain.

It belongs to the eukaryotic ribosomal protein eL27 family. In terms of assembly, component of the large ribosomal subunit.

The protein localises to the cytoplasm. It localises to the cytosol. The protein resides in the rough endoplasmic reticulum. Its function is as follows. Component of the large ribosomal subunit. This Ictalurus punctatus (Channel catfish) protein is Large ribosomal subunit protein eL27 (rpl27).